Consider the following 30-residue polypeptide: Dicynthaurin (30 aa).

Thr30 carries the threonine amide modification.

In terms of assembly, homodimer.

It is found in the secreted. Shows antibacterial activity against both Gram-positive and Gram-negative bacteria. Its antimicrobial activity is optimal at NaCl concentrations below 100 mM, suggesting that the antimicrobial actions of this peptide may take place intracellularly rather than extracellularly. Has no activity against the fungus C.albicans. Has modest hemolytic activity. The sequence is that of Dicynthaurin from Halocynthia aurantium (Sea peach).